Reading from the N-terminus, the 982-residue chain is Protein cramped (982 aa).

Disordered stretches follow at residues 1 to 37 (MEEL…GGGA), 71 to 111 (QKMK…GSGK), 323 to 349 (SLPS…ASLD), 407 to 456 (NKRL…SSGD), and 822 to 851 (GTSS…QEPG). The span at 7–20 (QPPPPPLTQPPPPS) shows a compositional bias: pro residues. Over residues 21 to 30 (SSVSIEEPLP) the composition is skewed to low complexity. Residues 86 to 98 (SEREPNKKEEKAA) show a composition bias toward basic and acidic residues. The segment covering 100 to 111 (KTPSQLKTGSGK) has biased composition (polar residues). Positions 109 to 173 (SGKTTWTNVE…HYYQTHHKIC (65 aa)) constitute an SANT domain. Positions 410 to 425 (LRTESGSEKRSPETKK) are enriched in basic and acidic residues. S431 and S437 each carry phosphoserine. Low complexity predominate over residues 822 to 833 (GTSSAGISTSGS).

It belongs to the cramped family. Ubiquitously expressed throughout embryonic development. High expression is detected in CNS and gonads.

Its subcellular location is the nucleus. In terms of biological role, polycomb group (Pc-G) genes are needed to maintain expression patterns of the homeotic selector genes of the Antennapedia (Antp-C) and Bithorax (Bx-C) complexes, and hence for the maintenance of segmental determination. Can act as a modifier of position effect variegation (PEV). This chain is Protein cramped (crm), found in Drosophila melanogaster (Fruit fly).